The primary structure comprises 180 residues: ATP-dependent protease subunit HslV (180 aa).

Residue Thr7 is part of the active site. Na(+) contacts are provided by Ala164, Cys167, and Thr170.

It belongs to the peptidase T1B family. HslV subfamily. As to quaternary structure, a double ring-shaped homohexamer of HslV is capped on each side by a ring-shaped HslU homohexamer. The assembly of the HslU/HslV complex is dependent on binding of ATP.

The protein localises to the cytoplasm. It catalyses the reaction ATP-dependent cleavage of peptide bonds with broad specificity.. Allosterically activated by HslU binding. Functionally, protease subunit of a proteasome-like degradation complex believed to be a general protein degrading machinery. This Brevibacillus brevis (strain 47 / JCM 6285 / NBRC 100599) protein is ATP-dependent protease subunit HslV.